The sequence spans 204 residues: ATP-dependent Clp protease proteolytic subunit 1 (204 aa).

Ser-97 (nucleophile) is an active-site residue. His-122 is a catalytic residue.

It belongs to the peptidase S14 family. In terms of assembly, fourteen ClpP subunits assemble into 2 heptameric rings which stack back to back to give a disk-like structure with a central cavity, resembling the structure of eukaryotic proteasomes.

The protein localises to the cytoplasm. The enzyme catalyses Hydrolysis of proteins to small peptides in the presence of ATP and magnesium. alpha-casein is the usual test substrate. In the absence of ATP, only oligopeptides shorter than five residues are hydrolyzed (such as succinyl-Leu-Tyr-|-NHMec, and Leu-Tyr-Leu-|-Tyr-Trp, in which cleavage of the -Tyr-|-Leu- and -Tyr-|-Trp bonds also occurs).. In terms of biological role, cleaves peptides in various proteins in a process that requires ATP hydrolysis. Has a chymotrypsin-like activity. Plays a major role in the degradation of misfolded proteins. This Nostoc sp. (strain PCC 7120 / SAG 25.82 / UTEX 2576) protein is ATP-dependent Clp protease proteolytic subunit 1.